The following is a 183-amino-acid chain: Inner membrane-spanning protein YciB (183 aa).

Helical transmembrane passes span 19-39 (LYGV…QLIV), 53-73 (IMGI…DLNF), 76-96 (WKVT…QFVF), 121-141 (LGWA…SYYF), and 151-171 (TFGF…YLYP).

It belongs to the YciB family.

The protein localises to the cell inner membrane. Functionally, plays a role in cell envelope biogenesis, maintenance of cell envelope integrity and membrane homeostasis. In Actinobacillus pleuropneumoniae serotype 7 (strain AP76), this protein is Inner membrane-spanning protein YciB.